The primary structure comprises 251 residues: Triosephosphate isomerase (251 aa).

2 residues coordinate substrate: asparagine 12 and lysine 14. Histidine 96 acts as the Electrophile in catalysis. The active-site Proton acceptor is glutamate 168.

This sequence belongs to the triosephosphate isomerase family. Homodimer.

It is found in the cytoplasm. The protein localises to the glycosome. The enzyme catalyses D-glyceraldehyde 3-phosphate = dihydroxyacetone phosphate. It functions in the pathway carbohydrate biosynthesis; gluconeogenesis. Its pathway is carbohydrate degradation; glycolysis; D-glyceraldehyde 3-phosphate from glycerone phosphate: step 1/1. This Leishmania mexicana protein is Triosephosphate isomerase.